A 254-amino-acid chain; its full sequence is Metalloprotease YcaL (254 aa).

A signal peptide spans 1–19 (MKNTKLLLAIATSAALLTG). The N-palmitoyl cysteine moiety is linked to residue Cys20. Cys20 carries S-diacylglycerol cysteine lipidation. His134 contributes to the Zn(2+) binding site. The active site involves Glu135. Zn(2+)-binding residues include His138 and Glu193. The interval 227–254 (GRTQSMFDSHPPSTERAQHIRDRIASGK) is disordered. A compositionally biased stretch (basic and acidic residues) spans 242-254 (RAQHIRDRIASGK).

It belongs to the peptidase M48B family. The cofactor is Zn(2+).

It is found in the cell inner membrane. Involved in the degradation of the LPS-assembly protein LptD. Degrades LptD that have engaged the Bam complex but are stalled at an early step in the outer membrane protein assembly process. This chain is Metalloprotease YcaL (ycaL), found in Escherichia coli (strain K12).